The following is a 546-amino-acid chain: CTP synthase (546 aa).

Positions 1-266 (MARYIFITGG…DTEVLDVFGL (266 aa)) are amidoligase domain. S13 contributes to the CTP binding site. Residue S13 participates in UTP binding. Residue 14-19 (SLGKGL) coordinates ATP. Y54 lines the L-glutamine pocket. Position 71 (D71) interacts with ATP. Mg(2+)-binding residues include D71 and E140. Residues 147–149 (DIE), 187–192 (KTKPTQ), and K223 contribute to the CTP site. UTP-binding positions include 187 to 192 (KTKPTQ) and K223. Residues 293 to 545 (NIAIVGKYTG…IGAAKERSRL (253 aa)) enclose the Glutamine amidotransferase type-1 domain. Residue A357 participates in L-glutamine binding. The active-site Nucleophile; for glutamine hydrolysis is C384. L-glutamine-binding positions include 385 to 388 (FGMQ), E408, and R473. Active-site residues include H518 and E520.

This sequence belongs to the CTP synthase family. Homotetramer.

It catalyses the reaction UTP + L-glutamine + ATP + H2O = CTP + L-glutamate + ADP + phosphate + 2 H(+). It carries out the reaction L-glutamine + H2O = L-glutamate + NH4(+). The enzyme catalyses UTP + NH4(+) + ATP = CTP + ADP + phosphate + 2 H(+). It participates in pyrimidine metabolism; CTP biosynthesis via de novo pathway; CTP from UDP: step 2/2. With respect to regulation, allosterically activated by GTP, when glutamine is the substrate; GTP has no effect on the reaction when ammonia is the substrate. The allosteric effector GTP functions by stabilizing the protein conformation that binds the tetrahedral intermediate(s) formed during glutamine hydrolysis. Inhibited by the product CTP, via allosteric rather than competitive inhibition. Catalyzes the ATP-dependent amination of UTP to CTP with either L-glutamine or ammonia as the source of nitrogen. Regulates intracellular CTP levels through interactions with the four ribonucleotide triphosphates. This is CTP synthase from Phenylobacterium zucineum (strain HLK1).